The sequence spans 338 residues: 3-phosphoshikimate 1-carboxyvinyltransferase 2 (338 aa).

Arg-25 is a phosphoenolpyruvate binding site. Residues Ser-72, Ser-73, Gln-74, Ser-100, Asp-225, and Lys-252 each coordinate 3-phosphoshikimate. Gln-74 lines the phosphoenolpyruvate pocket. Asp-225 acts as the Proton acceptor in catalysis. The phosphoenolpyruvate site is built by Arg-256, Arg-298, and Lys-323.

It belongs to the EPSP synthase family.

The protein resides in the plastid. Its subcellular location is the chloroplast. The catalysed reaction is 3-phosphoshikimate + phosphoenolpyruvate = 5-O-(1-carboxyvinyl)-3-phosphoshikimate + phosphate. The protein operates within metabolic intermediate biosynthesis; chorismate biosynthesis; chorismate from D-erythrose 4-phosphate and phosphoenolpyruvate: step 6/7. Its function is as follows. Catalyzes the transfer of the enolpyruvyl moiety of phosphoenolpyruvate (PEP) to the 5-hydroxyl of shikimate-3-phosphate (S3P) to produce enolpyruvyl shikimate-3-phosphate and inorganic phosphate. The protein is 3-phosphoshikimate 1-carboxyvinyltransferase 2 (EPSPS-2) of Nicotiana tabacum (Common tobacco).